Consider the following 401-residue polypeptide: S-adenosylmethionine synthase (401 aa).

135 to 140 (GHGSGD) contributes to the ATP binding site.

Belongs to the AdoMet synthase 2 family. Mg(2+) is required as a cofactor.

The enzyme catalyses L-methionine + ATP + H2O = S-adenosyl-L-methionine + phosphate + diphosphate. The protein operates within amino-acid biosynthesis; S-adenosyl-L-methionine biosynthesis; S-adenosyl-L-methionine from L-methionine: step 1/1. In terms of biological role, catalyzes the formation of S-adenosylmethionine from methionine and ATP. This Methanothermobacter thermautotrophicus (strain ATCC 29096 / DSM 1053 / JCM 10044 / NBRC 100330 / Delta H) (Methanobacterium thermoautotrophicum) protein is S-adenosylmethionine synthase (mat).